Reading from the N-terminus, the 139-residue chain is Large ribosomal subunit protein uL16 (139 aa).

The protein belongs to the universal ribosomal protein uL16 family. In terms of assembly, part of the 50S ribosomal subunit.

Functionally, binds 23S rRNA and is also seen to make contacts with the A and possibly P site tRNAs. This chain is Large ribosomal subunit protein uL16, found in Mycoplasma pneumoniae (strain ATCC 29342 / M129 / Subtype 1) (Mycoplasmoides pneumoniae).